Here is a 228-residue protein sequence, read N- to C-terminus: Ankyrin repeat domain-containing protein 46 (228 aa).

ANK repeat units follow at residues 11–40, 44–74, 77–103, and 107–138; these read QTNVPLLQACIDGDFTYSKRLLESGFDPNI, RGRTGLHLAAARGNVDICQLLHKFGADPLAT, QGNTALHLCGHVDTIQFLVSNGLKIDI, and QGATPLVLAKRRGVNKDVIRLLESLEEQEVKG. The helical transmembrane segment at 195–215 threads the bilayer; the sequence is VLLLILVIALLSLGIAYYVSG.

It localises to the membrane. The chain is Ankyrin repeat domain-containing protein 46 (Ankrd46) from Mus musculus (Mouse).